Here is a 229-residue protein sequence, read N- to C-terminus: Large ribosomal subunit protein uL3 (229 aa).

Position 151 is an N5-methylglutamine (Gln151).

Belongs to the universal ribosomal protein uL3 family. In terms of assembly, part of the 50S ribosomal subunit. Forms a cluster with proteins L14 and L19. Methylated by PrmB.

In terms of biological role, one of the primary rRNA binding proteins, it binds directly near the 3'-end of the 23S rRNA, where it nucleates assembly of the 50S subunit. This is Large ribosomal subunit protein uL3 from Paramagnetospirillum magneticum (strain ATCC 700264 / AMB-1) (Magnetospirillum magneticum).